We begin with the raw amino-acid sequence, 350 residues long: 4-hydroxy-2-oxovalerate aldolase 2 (350 aa).

The Pyruvate carboxyltransferase domain maps to 8–260 (ITVHDMTLRD…ETGVDVFKIQ (253 aa)). Substrate is bound at residue 16-17 (RD). A Mn(2+)-binding site is contributed by Asp-17. The active-site Proton acceptor is the His-20. Substrate is bound by residues Ser-170 and His-199. His-199 and His-201 together coordinate Mn(2+). Tyr-290 serves as a coordination point for substrate.

Belongs to the 4-hydroxy-2-oxovalerate aldolase family.

The enzyme catalyses (S)-4-hydroxy-2-oxopentanoate = acetaldehyde + pyruvate. This is 4-hydroxy-2-oxovalerate aldolase 2 (tesG) from Comamonas testosteroni (Pseudomonas testosteroni).